Reading from the N-terminus, the 954-residue chain is Glycine dehydrogenase (decarboxylating) (954 aa).

Lysine 701 carries the N6-(pyridoxal phosphate)lysine modification.

This sequence belongs to the GcvP family. In terms of assembly, the glycine cleavage system is composed of four proteins: P, T, L and H. The cofactor is pyridoxal 5'-phosphate.

The enzyme catalyses N(6)-[(R)-lipoyl]-L-lysyl-[glycine-cleavage complex H protein] + glycine + H(+) = N(6)-[(R)-S(8)-aminomethyldihydrolipoyl]-L-lysyl-[glycine-cleavage complex H protein] + CO2. Functionally, the glycine cleavage system catalyzes the degradation of glycine. The P protein binds the alpha-amino group of glycine through its pyridoxal phosphate cofactor; CO(2) is released and the remaining methylamine moiety is then transferred to the lipoamide cofactor of the H protein. In Bordetella pertussis (strain Tohama I / ATCC BAA-589 / NCTC 13251), this protein is Glycine dehydrogenase (decarboxylating).